The primary structure comprises 2176 residues: Protein sidekick-2 (2176 aa).

An N-terminal signal peptide occupies residues 1 to 24 (MFSSMWRLPLWTLLALHRIHSAGA). Residues 25–1936 (QDDVPPYFKT…ASPFYEEWWF (1912 aa)) lie on the Extracellular side of the membrane. 6 consecutive Ig-like C2-type domains span residues 30–112 (PYFK…TEVQ), 117–204 (GSFE…QPIT), 219–298 (PTII…SSVA), 312–402 (PQFV…LAVT), 406–495 (PNIT…ADLV), and 500–589 (TRIT…AHLR). An intrachain disulfide couples cysteine 52 to cysteine 95. N-linked (GlcNAc...) asparagine glycosylation is present at asparagine 197. Intrachain disulfides connect cysteine 241–cysteine 288, cysteine 334–cysteine 384, cysteine 427–cysteine 479, and cysteine 521–cysteine 573. 13 consecutive Fibronectin type-III domains span residues 596–692 (APEH…LPEE), 697–793 (PPQN…TLQG), 798–897 (PPGN…THED), 901–995 (PVGH…VPPE), 999–1098 (APTN…TLQA), 1103–1201 (APAN…TRES), 1206–1303 (GPTN…TLDD), 1307–1401 (PPMG…TEKR), 1406–1503 (PPSK…TLQA), 1508–1625 (APTI…VGEA), 1630–1726 (APQN…TQQA), 1730–1825 (APGS…TGPG), and 1828–1930 (APGP…ASPF). N-linked (GlcNAc...) asparagine glycosylation is present at asparagine 747. Residues asparagine 940 and asparagine 952 are each glycosylated (N-linked (GlcNAc...) asparagine). N-linked (GlcNAc...) asparagine glycosylation is present at asparagine 1106. An N-linked (GlcNAc...) asparagine glycan is attached at asparagine 1592. Residues 1712-1734 (DGPRSTPTRGQTQQAAPSAPGSV) are disordered. Residues 1716–1727 (STPTRGQTQQAA) are compositionally biased toward polar residues. Residues 1937 to 1957 (LVVIALVGLIFILLLVFVLII) form a helical membrane-spanning segment. Over 1958-2176 (RGQSKKYSKK…APIAGFSSFV (219 aa)) the chain is Cytoplasmic. Disordered stretches follow at residues 2013 to 2032 (GLYT…YSDE), 2043 to 2070 (AESS…VDTN), and 2102 to 2176 (QAYS…SSFV). 2 stretches are compositionally biased toward polar residues: residues 2044-2070 (ESSS…VDTN) and 2119-2129 (VPNSNSTQQGS). The PDZ-binding motif lies at 2170–2176 (AGFSSFV).

Belongs to the sidekick family. In terms of assembly, homodimer; mediates homophilic interactions to promote cell adhesion. Interacts (via PDZ-binding motif) with MAGI1, MAGI2, DLG2, DLG3 and DLG4. As to expression, expressed in retinal ganglion cells (RGCs) that form synapses in distinct inner plexiform layer (IPL) sublaminae. Specifically expressed in specific subsets of retinal ganglion cells (RGCs), named W3B-RGCs, that specifically respond when the timing of the movement of a small object differs from that of the background, but not when they coincide (at protein level). Also present in excitatory amacrine cell type called VG3-ACs, that provide strong and selective input W3B-RGCs (at protein level). Expressed at low levels in the glomeruli.

The protein resides in the cell membrane. It localises to the synapse. Its function is as follows. Adhesion molecule that promotes lamina-specific synaptic connections in the retina and is specifically required for the formation of neuronal circuits that detect motion. Acts by promoting formation of synapses between two specific retinal cell types: the retinal ganglion cells W3B-RGCs and the excitatory amacrine cells VG3-ACs. Formation of synapses between these two cells plays a key role in detection of motion. Promotes synaptic connectivity via homophilic interactions. This is Protein sidekick-2 from Mus musculus (Mouse).